Consider the following 249-residue polypeptide: Flagellar brake protein YcgR (249 aa).

Residues 117–236 (QRREFFRVDA…ERELQQVIFS (120 aa)) form the PilZ domain.

This sequence belongs to the YcgR family. In terms of assembly, monomer. Interacts with the flagellar basal bodies.

The protein localises to the bacterial flagellum basal body. In terms of biological role, acts as a flagellar brake, regulating swimming and swarming in a bis-(3'-5') cyclic diguanylic acid (c-di-GMP)-dependent manner. Binds 1 c-di-GMP dimer per subunit. Increasing levels of c-di-GMP lead to decreased motility. The protein is Flagellar brake protein YcgR of Erwinia tasmaniensis (strain DSM 17950 / CFBP 7177 / CIP 109463 / NCPPB 4357 / Et1/99).